The chain runs to 421 residues: 4-hydroxy-3-methylbut-2-en-1-yl diphosphate synthase (flavodoxin) (421 aa).

[4Fe-4S] cluster contacts are provided by C298, C301, C344, and E351.

The protein belongs to the IspG family. [4Fe-4S] cluster is required as a cofactor.

It carries out the reaction (2E)-4-hydroxy-3-methylbut-2-enyl diphosphate + oxidized [flavodoxin] + H2O + 2 H(+) = 2-C-methyl-D-erythritol 2,4-cyclic diphosphate + reduced [flavodoxin]. Its pathway is isoprenoid biosynthesis; isopentenyl diphosphate biosynthesis via DXP pathway; isopentenyl diphosphate from 1-deoxy-D-xylulose 5-phosphate: step 5/6. Converts 2C-methyl-D-erythritol 2,4-cyclodiphosphate (ME-2,4cPP) into 1-hydroxy-2-methyl-2-(E)-butenyl 4-diphosphate. This Neisseria meningitidis serogroup B (strain ATCC BAA-335 / MC58) protein is 4-hydroxy-3-methylbut-2-en-1-yl diphosphate synthase (flavodoxin).